Here is a 220-residue protein sequence, read N- to C-terminus: Ribose-5-phosphate isomerase A (220 aa).

Substrate-binding positions include 28-31, 81-84, and 94-97; these read TGST, DGAD, and KGGG. Glu103 (proton acceptor) is an active-site residue. Substrate is bound at residue Lys121.

Belongs to the ribose 5-phosphate isomerase family. As to quaternary structure, homodimer.

The catalysed reaction is aldehydo-D-ribose 5-phosphate = D-ribulose 5-phosphate. The protein operates within carbohydrate degradation; pentose phosphate pathway; D-ribose 5-phosphate from D-ribulose 5-phosphate (non-oxidative stage): step 1/1. Its function is as follows. Catalyzes the reversible conversion of ribose-5-phosphate to ribulose 5-phosphate. This is Ribose-5-phosphate isomerase A from Yersinia enterocolitica serotype O:8 / biotype 1B (strain NCTC 13174 / 8081).